The primary structure comprises 284 residues: Mediator of RNA polymerase II transcription subunit 4 (284 aa).

N-acetylserine is present on Ser2. The disordered stretch occupies residues 205 to 284; sequence RIPGEEVEET…DLDLFDPDDF (80 aa). Residues 225 to 238 show a composition bias toward basic and acidic residues; sequence EEQKGQMAKKEGTP. Residue Thr237 is modified to Phosphothreonine; by KIN28. Ser242 is modified (phosphoserine). Positions 248–265 are enriched in basic and acidic residues; the sequence is TAKEVGDEADNTKDKEKE. Positions 266-284 are enriched in acidic residues; the sequence is ENNDDALDLDLDLFDPDDF.

It belongs to the Mediator complex subunit 4 family. Component of the Mediator complex, which is composed of at least 21 subunits that form three structurally distinct submodules. The Mediator head module contains MED6, MED8, MED11, SRB4/MED17, SRB5/MED18, ROX3/MED19, SRB2/MED20 and SRB6/MED22, the middle module contains MED1, MED4, NUT1/MED5, MED7, CSE2/MED9, NUT2/MED10, SRB7/MED21 and SOH1/MED31, and the tail module contains MED2, PGD1/MED3, RGR1/MED14, GAL11/MED15 and SIN4/MED16. The head and the middle modules interact directly with RNA polymerase II, whereas the elongated tail module interacts with gene-specific regulatory proteins. MED4 interacts directly with MED1, MED7 and SRB7/MED21.

Its subcellular location is the nucleus. In terms of biological role, component of the Mediator complex, a coactivator involved in the regulated transcription of nearly all RNA polymerase II-dependent genes. Mediator functions as a bridge to convey information from gene-specific regulatory proteins to the basal RNA polymerase II transcription machinery. The Mediator complex, having a compact conformation in its free form, is recruited to promoters by direct interactions with regulatory proteins and serves for the assembly of a functional preinitiation complex with RNA polymerase II and the general transcription factors. The Mediator complex unfolds to an extended conformation and partially surrounds RNA polymerase II, specifically interacting with the unphosphorylated form of the C-terminal domain (CTD) of RNA polymerase II. The Mediator complex dissociates from the RNA polymerase II holoenzyme and stays at the promoter when transcriptional elongation begins. This is Mediator of RNA polymerase II transcription subunit 4 (MED4) from Saccharomyces cerevisiae (strain ATCC 204508 / S288c) (Baker's yeast).